The following is a 509-amino-acid chain: Lysine--tRNA ligase (509 aa).

Mg(2+) contacts are provided by Glu417 and Glu424.

The protein belongs to the class-II aminoacyl-tRNA synthetase family. As to quaternary structure, homodimer. Mg(2+) serves as cofactor.

It localises to the cytoplasm. It catalyses the reaction tRNA(Lys) + L-lysine + ATP = L-lysyl-tRNA(Lys) + AMP + diphosphate. This chain is Lysine--tRNA ligase, found in Blochmanniella pennsylvanica (strain BPEN).